The chain runs to 340 residues: Ephrin-B3 (340 aa).

Residues 1 to 27 form the signal peptide; sequence MGPPHSGPGGVRVGALLLLGVLGLVSG. The region spanning 28–167 is the Ephrin RBD domain; it reads LSLEPVYWNS…TRGMKVLLRV (140 aa). Over 28-226 the chain is Extracellular; it reads LSLEPVYWNS…EGPLPPPSMP (199 aa). 2 disulfides stabilise this stretch: cysteine 62-cysteine 104 and cysteine 92-cysteine 156. Positions 168-225 are disordered; sequence GQSPRGGAVPRKPVSEMPMERDRGAAHSLEPGKENLPGDPTSNATSRGAEGPLPPPSM. Positions 185–200 are enriched in basic and acidic residues; sequence PMERDRGAAHSLEPGK. N-linked (GlcNAc...) asparagine glycosylation is present at asparagine 210. A helical transmembrane segment spans residues 227 to 247; the sequence is AVAGAAGGLALLLLGVAGAGG. Topologically, residues 248 to 340 are cytoplasmic; that stretch reads AMCWRRRRAK…QSPPNIYYKV (93 aa). The segment at 254–298 is disordered; that stretch reads RRAKPSESRHPGPGSFGRGGSLGLGGGGGMGPREAEPGELGIALR. The span at 267-284 shows a compositional bias: gly residues; that stretch reads GSFGRGGSLGLGGGGGMG. Position 271 is an omega-N-methylarginine (arginine 271). The residue at position 274 (serine 274) is a Phosphoserine. Residues 338 to 340 carry the PDZ-binding motif; the sequence is YKV.

The protein belongs to the ephrin family. Interacts with GRIP1 and GRIP2. As to quaternary structure, (Microbial infection) Interacts with nipah virus and hendra virus glycoprotein. As to expression, highly expressed in brain; expressed in embryonic floor plate, roof plate and hindbrain segments.

It localises to the membrane. Functionally, cell surface transmembrane ligand for Eph receptors, a family of receptor tyrosine kinases which are crucial for migration, repulsion and adhesion during neuronal, vascular and epithelial development. Binds promiscuously Eph receptors residing on adjacent cells, leading to contact-dependent bidirectional signaling into neighboring cells. The signaling pathway downstream of the receptor is referred to as forward signaling while the signaling pathway downstream of the ephrin ligand is referred to as reverse signaling. May play a pivotal role in forebrain function. Binds to, and induce the collapse of, commissural axons/growth cones in vitro. May play a role in constraining the orientation of longitudinally projecting axons. (Microbial infection) Acts as a receptor for nipah virus and hendra virus. In Homo sapiens (Human), this protein is Ephrin-B3 (EFNB3).